The primary structure comprises 795 residues: Histidine biosynthesis trifunctional protein (795 aa).

The phosphoribosyl-AMP cyclohydrolase stretch occupies residues 1–225 (MLPVVPVFNA…VVRQGGSGSF (225 aa)). The segment at 226–308 (CHLETESCFG…FYFAMARLVA (83 aa)) is phosphoribosyl-ATP pyrophosphohydrolase. A histidinol dehydrogenase region spans residues 309–795 (NGVSLEDVER…KLGLLPSGFE (487 aa)). 2 residues coordinate Zn(2+): Gln614 and His617. Active-site residues include Glu683 and His684. The Zn(2+) site is built by Asp717 and His776.

The protein in the C-terminal section; belongs to the histidinol dehydrogenase family. Requires Zn(2+) as cofactor.

The enzyme catalyses 1-(5-phospho-beta-D-ribosyl)-5'-AMP + H2O = 1-(5-phospho-beta-D-ribosyl)-5-[(5-phospho-beta-D-ribosylamino)methylideneamino]imidazole-4-carboxamide. The catalysed reaction is 1-(5-phospho-beta-D-ribosyl)-ATP + H2O = 1-(5-phospho-beta-D-ribosyl)-5'-AMP + diphosphate + H(+). It catalyses the reaction L-histidinol + 2 NAD(+) + H2O = L-histidine + 2 NADH + 3 H(+). It participates in amino-acid biosynthesis; L-histidine biosynthesis; L-histidine from 5-phospho-alpha-D-ribose 1-diphosphate: step 2/9. Its pathway is amino-acid biosynthesis; L-histidine biosynthesis; L-histidine from 5-phospho-alpha-D-ribose 1-diphosphate: step 3/9. The protein operates within amino-acid biosynthesis; L-histidine biosynthesis; L-histidine from 5-phospho-alpha-D-ribose 1-diphosphate: step 9/9. The protein is Histidine biosynthesis trifunctional protein (HIS4) of Kluyveromyces lactis (strain ATCC 8585 / CBS 2359 / DSM 70799 / NBRC 1267 / NRRL Y-1140 / WM37) (Yeast).